Consider the following 457-residue polypeptide: Adenylosuccinate synthetase isozyme 1 (457 aa).

A disordered region spans residues 1–25 (MSGTRASNDRPPSAGGVKRGRLQHE). GTP is bound by residues 42–48 (GDEGKGK) and 70–72 (GHT). Asp43 serves as the catalytic Proton acceptor. The Mg(2+) site is built by Asp43 and Gly70. A substrate-binding site is contributed by Asp43. IMP is bound by residues 43–46 (DEGK), 68–71 (NAGH), Thr163, Arg177, Asn256, Thr271, and Arg335. His71 acts as the Proton donor in catalysis. A substrate-binding site is contributed by 331-337 (VTTGRKR). Residues Arg337, 363–365 (KLD), and 445–448 (GVGK) each bind GTP.

This sequence belongs to the adenylosuccinate synthetase family. In terms of assembly, homodimer. Requires Mg(2+) as cofactor. Predominantly expressed in the striated muscle tissues.

It is found in the cytoplasm. It carries out the reaction IMP + L-aspartate + GTP = N(6)-(1,2-dicarboxyethyl)-AMP + GDP + phosphate + 2 H(+). The protein operates within purine metabolism; AMP biosynthesis via de novo pathway; AMP from IMP: step 1/2. Component of the purine nucleotide cycle (PNC), which interconverts IMP and AMP to regulate the nucleotide levels in various tissues, and which contributes to glycolysis and ammoniagenesis. Catalyzes the first committed step in the biosynthesis of AMP from IMP. This chain is Adenylosuccinate synthetase isozyme 1, found in Sus scrofa (Pig).